Reading from the N-terminus, the 525-residue chain is Chromosomal replication initiator protein DnaA (525 aa).

The tract at residues 1-71 is domain I, interacts with DnaA modulators; it reads MNDFWQHCSA…SDLAREFWNT (71 aa). The segment at 71 to 188 is domain II; it reads TPIEVQFVLD…GEADSMYERS (118 aa). A disordered region spans residues 160-182; it reads AAAGRRTWRPGPGAAPANGGEAD. Residues 169–181 are compositionally biased toward low complexity; the sequence is PGPGAAPANGGEA. A domain III, AAA+ region region spans residues 189–405; it reads KLNPVLTFDN…GALRKILAYS (217 aa). ATP is bound by residues Gly233, Gly235, Lys236, and Thr237. Residues 406–525 are domain IV, binds dsDNA; the sequence is KFHGREISIE…LHVLEQTLKG (120 aa).

It belongs to the DnaA family. As to quaternary structure, oligomerizes as a right-handed, spiral filament on DNA at oriC.

It is found in the cytoplasm. Functionally, plays an essential role in the initiation and regulation of chromosomal replication. ATP-DnaA binds to the origin of replication (oriC) to initiate formation of the DNA replication initiation complex once per cell cycle. Binds the DnaA box (a 9 base pair repeat at the origin) and separates the double-stranded (ds)DNA. Forms a right-handed helical filament on oriC DNA; dsDNA binds to the exterior of the filament while single-stranded (ss)DNA is stabiized in the filament's interior. The ATP-DnaA-oriC complex binds and stabilizes one strand of the AT-rich DNA unwinding element (DUE), permitting loading of DNA polymerase. After initiation quickly degrades to an ADP-DnaA complex that is not apt for DNA replication. Binds acidic phospholipids. This is Chromosomal replication initiator protein DnaA from Burkholderia orbicola (strain MC0-3).